The following is a 119-amino-acid chain: Aspartate 1-decarboxylase (119 aa).

Catalysis depends on Ser25, which acts as the Schiff-base intermediate with substrate; via pyruvic acid. The residue at position 25 (Ser25) is a Pyruvic acid (Ser). Residue Thr57 participates in substrate binding. Tyr58 (proton donor) is an active-site residue. 73 to 75 (GAA) contacts substrate.

The protein belongs to the PanD family. In terms of assembly, heterooctamer of four alpha and four beta subunits. Pyruvate serves as cofactor. Post-translationally, is synthesized initially as an inactive proenzyme, which is activated by self-cleavage at a specific serine bond to produce a beta-subunit with a hydroxyl group at its C-terminus and an alpha-subunit with a pyruvoyl group at its N-terminus.

It is found in the cytoplasm. The catalysed reaction is L-aspartate + H(+) = beta-alanine + CO2. Its pathway is cofactor biosynthesis; (R)-pantothenate biosynthesis; beta-alanine from L-aspartate: step 1/1. In terms of biological role, catalyzes the pyruvoyl-dependent decarboxylation of aspartate to produce beta-alanine. In Ruthia magnifica subsp. Calyptogena magnifica, this protein is Aspartate 1-decarboxylase.